The sequence spans 148 residues: Urease accessory protein UreE (148 aa).

The protein belongs to the UreE family.

The protein localises to the cytoplasm. Its function is as follows. Involved in urease metallocenter assembly. Binds nickel. Probably functions as a nickel donor during metallocenter assembly. The chain is Urease accessory protein UreE from Bacillus sp. (strain TB-90).